A 130-amino-acid chain; its full sequence is Serum amyloid A protein (130 aa).

Residues 1-18 (MKLFTGLILCSLVLGVHS) form the signal peptide. Residue Gln19 is modified to Pyrrolidone carboxylic acid. Residues 86–130 (TDPLFKGTTSGQGQEDSRADQAANEWGRSGKDPNHFRPAGLPDKY) form a disordered region.

Belongs to the SAA family. Post-translationally, this protein is the precursor of amyloid protein A, which is formed by the removal of residues from the C-terminal end. In terms of tissue distribution, expressed by the liver; secreted in plasma.

It is found in the secreted. In terms of biological role, major acute phase reactant. Apolipoprotein of the HDL complex. The polypeptide is Serum amyloid A protein (SAA1) (Bos taurus (Bovine)).